The following is a 102-amino-acid chain: Small ribosomal subunit protein uS10 (102 aa).

This sequence belongs to the universal ribosomal protein uS10 family. As to quaternary structure, part of the 30S ribosomal subunit.

Involved in the binding of tRNA to the ribosomes. In Streptococcus uberis (strain ATCC BAA-854 / 0140J), this protein is Small ribosomal subunit protein uS10.